The chain runs to 313 residues: Solute carrier family 35 member E3 (313 aa).

10 consecutive transmembrane segments (helical) span residues 17-37 (GLLL…WIYV), 40-60 (GFPN…GLYV), 77-97 (LLLL…SLQN), 100-120 (IGTY…IQTL), 130-147 (IRLT…NSYY), 153-173 (FLGT…QVWV), 187-206 (LLYY…VPFF), 225-245 (LMVL…YWII), 252-272 (TYNM…YVLF), and 275-295 (PLSI…LAYT).

It belongs to the TPT transporter family. SLC35E subfamily.

It is found in the membrane. Functionally, putative transporter. The protein is Solute carrier family 35 member E3 (SLC35E3) of Bos taurus (Bovine).